The sequence spans 284 residues: 4-diphosphocytidyl-2-C-methyl-D-erythritol kinase (284 aa).

Lys14 is a catalytic residue. 98-108 contacts ATP; the sequence is PMGGGLGGGSS. The active site involves Asp140.

Belongs to the GHMP kinase family. IspE subfamily.

The catalysed reaction is 4-CDP-2-C-methyl-D-erythritol + ATP = 4-CDP-2-C-methyl-D-erythritol 2-phosphate + ADP + H(+). Its pathway is isoprenoid biosynthesis; isopentenyl diphosphate biosynthesis via DXP pathway; isopentenyl diphosphate from 1-deoxy-D-xylulose 5-phosphate: step 3/6. Its function is as follows. Catalyzes the phosphorylation of the position 2 hydroxy group of 4-diphosphocytidyl-2C-methyl-D-erythritol. The protein is 4-diphosphocytidyl-2-C-methyl-D-erythritol kinase of Shewanella baltica (strain OS185).